Here is a 68-residue protein sequence, read N- to C-terminus: MGSFSIWHWLIVLVVVLLLFGRGKIPELMGDVAKGIKNFKKGMTDEEAASADKTIDGKTVEHKSDEVR.

Residues 1–21 (MGSFSIWHWLIVLVVVLLLFG) traverse the membrane as a helical segment. The interval 46-68 (EEAASADKTIDGKTVEHKSDEVR) is disordered. Over residues 53–68 (KTIDGKTVEHKSDEVR) the composition is skewed to basic and acidic residues.

Belongs to the TatA/E family. The Tat system comprises two distinct complexes: a TatABC complex, containing multiple copies of TatA, TatB and TatC subunits, and a separate TatA complex, containing only TatA subunits. Substrates initially bind to the TatABC complex, which probably triggers association of the separate TatA complex to form the active translocon.

The protein resides in the cell inner membrane. Part of the twin-arginine translocation (Tat) system that transports large folded proteins containing a characteristic twin-arginine motif in their signal peptide across membranes. TatA could form the protein-conducting channel of the Tat system. This is Sec-independent protein translocase protein TatA from Sinorhizobium fredii (strain NBRC 101917 / NGR234).